We begin with the raw amino-acid sequence, 106 residues long: DNA-directed RNA polymerase subunit Rpo6 (106 aa).

It belongs to the archaeal Rpo6/eukaryotic RPB6 RNA polymerase subunit family. In terms of assembly, part of the RNA polymerase complex.

The protein localises to the cytoplasm. It catalyses the reaction RNA(n) + a ribonucleoside 5'-triphosphate = RNA(n+1) + diphosphate. In terms of biological role, DNA-dependent RNA polymerase (RNAP) catalyzes the transcription of DNA into RNA using the four ribonucleoside triphosphates as substrates. This Pyrobaculum aerophilum (strain ATCC 51768 / DSM 7523 / JCM 9630 / CIP 104966 / NBRC 100827 / IM2) protein is DNA-directed RNA polymerase subunit Rpo6.